We begin with the raw amino-acid sequence, 62 residues long: Potassium channel toxin kappa-KTx 3.3 (62 aa).

An N-terminal signal peptide occupies residues 1–26 (MKSTLMTASLLILVLLSIVDYASVYA). Residues 27-36 (ELIDSEISME) constitute a propeptide that is removed on maturation. 2 cysteine pairs are disulfide-bonded: Cys43-Cys61 and Cys47-Cys57.

This sequence belongs to the short scorpion toxin superfamily. Potassium channel inhibitor kappa-KTx family. Kappa-KTx 3 subfamily. Expressed by the venom gland.

The protein localises to the secreted. In terms of biological role, potassium channel inhibitor (Kv). In Heterometrus petersii (Asian forest scorpion), this protein is Potassium channel toxin kappa-KTx 3.3.